The sequence spans 75 residues: Protein BRICK1 (75 aa).

Ala-2 carries the post-translational modification N-acetylalanine. Residues 41-72 (MSCRSRLATLNEKLTALERRIEYIEARVTKGE) are a coiled coil.

It belongs to the BRK1 family. In terms of assembly, homotrimer when in free form. Directly interacts with WASF2. Component of the WAVE1 complex composed of ABI2, CYFIP1 or CYFIP2, BRK1, NCKAP1 and WASF1/WAVE1. Within the complex, a heterodimer containing NCKAP1 and CYFIP1 interacts with a heterotrimer formed by WAVE1, ABI2 and BRK1.

It localises to the cytoplasm. Its subcellular location is the cytoskeleton. Functionally, involved in regulation of actin and microtubule organization. Part of a WAVE complex that activates the Arp2/3 complex. As component of the WAVE1 complex, required for BDNF-NTRK2 endocytic trafficking and signaling from early endosomes. In Homo sapiens (Human), this protein is Protein BRICK1 (BRK1).